A 144-amino-acid chain; its full sequence is Peptidyl-Asp metalloendopeptidase (144 aa).

His-64 is a binding site for Zn(2+). The active site involves Glu-65. His-68 serves as a coordination point for Zn(2+).

It belongs to the peptidase M72 family. Requires Zn(2+) as cofactor.

It carries out the reaction Cleavage of Xaa-|-Asp, Xaa-|-Glu and Xaa-|-cysteic acid bonds.. In terms of biological role, metalloprotease, specifically cleaves on the N-terminal side of aspartyl, glutamyl and cysteic acid residues. The protein is Peptidyl-Asp metalloendopeptidase of Pseudomonas fragi.